Consider the following 403-residue polypeptide: NADH-quinone oxidoreductase subunit D (403 aa).

The protein belongs to the complex I 49 kDa subunit family. As to quaternary structure, NDH-1 is composed of 14 different subunits. Subunits NuoB, C, D, E, F, and G constitute the peripheral sector of the complex.

It localises to the cell membrane. The catalysed reaction is a quinone + NADH + 5 H(+)(in) = a quinol + NAD(+) + 4 H(+)(out). In terms of biological role, NDH-1 shuttles electrons from NADH, via FMN and iron-sulfur (Fe-S) centers, to quinones in the respiratory chain. The immediate electron acceptor for the enzyme in this species is believed to be a menaquinone. Couples the redox reaction to proton translocation (for every two electrons transferred, four hydrogen ions are translocated across the cytoplasmic membrane), and thus conserves the redox energy in a proton gradient. In Amoebophilus asiaticus (strain 5a2), this protein is NADH-quinone oxidoreductase subunit D.